Consider the following 496-residue polypeptide: MADLPTPLTNLKIQYTKIFINNEWHDSVSGKKFPVLNPATEEQICLIEEGDKADVDKAVKAARQAFQIGSPWRTMDASERGRLLYKLADLIERDRLLLATMESLNAGKLFPNAYLMDLGGCIKTLRYCAGWADKIQGRTMPMDGDFFCYTRHEPVGVCGQIIPWNFPLVMLIWKIGPALSCGNTVIVKPAEQTPLTALHVASLIKEAGFPPGVVNIVPGYGPTAGAAISSHMDIDKVAFTGSTEVGKLIKEAAGKSNLKRVTLELGGKSPCIVFADADLDNAVEFAHQGVFYHQGQCCIAASRLFVEESIYDEFVRRSVERAKKYVLGNPLAPEVNQGPQIDKEQYNKILDLIESGKKEGAKLECGGGPWGNKGYFIQPTVFSNVTDEMRIAKEEIFGPVQQIMKFKSLDDVIKRANNTTYGLSAGIFTKDLDKAVTVSSALQAGTVWVNCYSVVSAQVPFGGFKMSGNGRELGEYGLQQYTEVKTVTVKISQKNS.

Residues Lys-86 and Lys-123 each carry the N6-acetyllysine modification. NAD(+)-binding positions include 162 to 165 (IPWN), 188 to 191 (KPAE), 221 to 222 (GP), and 241 to 242 (GS). Position 247 is an N6-acetyllysine (Lys-247). The Proton acceptor role is filled by Glu-264. NAD(+) is bound at residue 264 to 266 (ELG). The active-site Nucleophile is Cys-298. The mediates interaction with PRMT3 stretch occupies residues 331 to 496 (LAPEVNQGPQ…VTVKISQKNS (166 aa)). NAD(+) is bound at residue 344 to 348 (EQYNK). 2 positions are modified to N6-acetyllysine: Lys-348 and Lys-362. Residue 395–397 (EIF) participates in NAD(+) binding. Lys-405 is subject to N6-acetyllysine. Phosphoserine is present on Ser-408. Lys-414, Lys-430, and Lys-490 each carry N6-acetyllysine.

Belongs to the aldehyde dehydrogenase family. In terms of assembly, homotetramer. Interacts with PRMT3; the interaction is direct, inhibits ALDH1A1 aldehyde dehydrogenase activity and is independent of the methyltransferase activity of PRMT3. In terms of processing, the N-terminus is blocked most probably by acetylation.

It is found in the cytoplasm. The protein resides in the cytosol. The protein localises to the cell projection. Its subcellular location is the axon. The enzyme catalyses an aldehyde + NAD(+) + H2O = a carboxylate + NADH + 2 H(+). The catalysed reaction is all-trans-retinal + NAD(+) + H2O = all-trans-retinoate + NADH + 2 H(+). It catalyses the reaction 9-cis-retinal + NAD(+) + H2O = 9-cis-retinoate + NADH + 2 H(+). It carries out the reaction 11-cis-retinal + NAD(+) + H2O = 11-cis-retinoate + NADH + 2 H(+). The enzyme catalyses 13-cis-retinal + NAD(+) + H2O = 13-cis-retinoate + NADH + 2 H(+). The catalysed reaction is (E)-4-hydroxynon-2-enal + NAD(+) + H2O = (E)-4-hydroxynon-2-enoate + NADH + 2 H(+). It catalyses the reaction malonaldehyde + NAD(+) + H2O = 3-oxopropanoate + NADH + 2 H(+). It carries out the reaction hexanal + NAD(+) + H2O = hexanoate + NADH + 2 H(+). The enzyme catalyses propanal + NAD(+) + H2O = propanoate + NADH + 2 H(+). The catalysed reaction is 3-deoxyglucosone + NAD(+) + H2O = 2-dehydro-3-deoxy-D-gluconate + NADH + 2 H(+). It catalyses the reaction acetaldehyde + NAD(+) + H2O = acetate + NADH + 2 H(+). It carries out the reaction benzaldehyde + NAD(+) + H2O = benzoate + NADH + 2 H(+). The enzyme catalyses 4-aminobutanal + NAD(+) + H2O = 4-aminobutanoate + NADH + 2 H(+). Its pathway is cofactor metabolism; retinol metabolism. Functionally, cytosolic dehydrogenase that catalyzes the irreversible oxidation of a wide range of aldehydes to their corresponding carboxylic acid. Functions downstream of retinol dehydrogenases and catalyzes the oxidation of retinaldehyde into retinoic acid, the second step in the oxidation of retinol/vitamin A into retinoic acid. This pathway is crucial to control the levels of retinol and retinoic acid, two important molecules which excess can be teratogenic and cytotoxic. Also oxidizes aldehydes resulting from lipid peroxidation like (E)-4-hydroxynon-2-enal/HNE, malonaldehyde and hexanal that form protein adducts and are highly cytotoxic. By participating for instance to the clearance of (E)-4-hydroxynon-2-enal/HNE in the lens epithelium prevents the formation of HNE-protein adducts and lens opacification. Functions also downstream of fructosamine-3-kinase in the fructosamine degradation pathway by catalyzing the oxidation of 3-deoxyglucosone, the carbohydrate product of fructosamine 3-phosphate decomposition, which is itself a potent glycating agent that may react with lysine and arginine side-chains of proteins. Also has an aminobutyraldehyde dehydrogenase activity and is probably part of an alternative pathway for the biosynthesis of GABA/4-aminobutanoate in midbrain, thereby playing a role in GABAergic synaptic transmission. The chain is Aldehyde dehydrogenase 1A1 from Oryctolagus cuniculus (Rabbit).